The sequence spans 499 residues: Potassium voltage-gated channel subfamily A member 2 (499 aa).

The disordered stretch occupies residues 1–27; that stretch reads MTVATGEPADEAAALPGHPQDTYDPEA. The segment at 1–125 is tetramerization domain; that stretch reads MTVATGEPAD…YELGEEAMEM (125 aa). Residues 1-160 lie on the Cytoplasmic side of the membrane; that stretch reads MTVATGEPAD…LLFEYPESSG (160 aa). The chain crosses the membrane as a helical span at residues 161–182; the sequence is PARIIAIVSVMVILISIVSFCL. Topologically, residues 183–221 are extracellular; sequence ETLPIFRDENEDMHGGGVTFHTYSNSTIGYQQSTSFTDP. N-linked (GlcNAc...) asparagine glycosylation is present at asparagine 207. Residues 222–243 traverse the membrane as a helical segment; that stretch reads FFIVETLCIIWFSFEFLVRFFA. Cysteine 244 is lipidated: S-palmitoyl cysteine. At 244-254 the chain is on the cytoplasmic side; it reads CPSKAGFFTNI. A helical membrane pass occupies residues 255–275; the sequence is MNIIDIVAIIPYFITLGTELA. The Extracellular portion of the chain corresponds to 276-289; that stretch reads EKPEDAQQGQQAMS. Residues 290 to 310 form a helical; Voltage-sensor membrane-spanning segment; that stretch reads LAILRVIRLVRVFRIFKLSRH. The Cytoplasmic portion of the chain corresponds to 311–325; sequence SKGLQILGQTLKASM. The tract at residues 312–325 is S4-S5 linker; it reads KGLQILGQTLKASM. Residues 326–347 form a helical membrane-spanning segment; that stretch reads RELGLLIFFLFIGVILFSSAVY. Over 348 to 361 the chain is Extracellular; sequence FAEADERESQFPSI. Positions 362 to 373 form an intramembrane region, helical; it reads PDAFWWAVVSMT. The Selectivity filter signature appears at 374–379; the sequence is TVGYGD. An intramembrane segment occupies 374–381; it reads TVGYGDMV. The Extracellular portion of the chain corresponds to 382–388; it reads PTTIGGK. Residues 389–417 form a helical membrane-spanning segment; that stretch reads IVGSLCAIAGVLTIALPVPVIVSNFNYFY. The Cytoplasmic portion of the chain corresponds to 418 to 499; sequence HRETEGEEQA…VNITKMLTDV (82 aa). Phosphotyrosine is present on tyrosine 429. 4 positions are modified to phosphoserine: serine 434, serine 440, serine 441, and serine 449. Tyrosine 458 bears the Phosphotyrosine mark. Serine 468 carries the post-translational modification Phosphoserine. The short motif at 497 to 499 is the PDZ-binding element; sequence TDV.

Belongs to the potassium channel family. A (Shaker) (TC 1.A.1.2) subfamily. Kv1.2/KCNA2 sub-subfamily. Homotetramer and heterotetramer with other channel-forming alpha subunits, such as KCNA1, KCNA4, KCNA5, KCNA6 and KCNA7. Channel activity is regulated by interaction with the beta subunits, including KCNAB1 and KCNAB2. Identified in a complex with KCNA1 and KCNAB2. Identified in a complex with KCNA5 and KCNAB1. Interacts with the beta subunit KCNAB1. Identified in a complex with KCNA4 and FYN. Interacts with PTK2B. Interacts (via C-terminus) with CTTN. Interacts (via N-terminal cytoplasmic domain) with RHOA (GTP-bound form); this regulates channel activity by reducing location at the cell surface in response to CHRM1 activation. Interacts with DRD2. Interacts with SIGMAR1; cocaine consumption leads to increased interaction. Interacts with ADAM22. Interacts with CNTNAP2. Interacts (via C-terminus) with the PDZ domains of DLG1, DLG2 and DLG4. Interacts with ADAM11. Interacts with LYNX1. Phosphorylated on tyrosine residues; phosphorylation increases in response to ischemia. Phosphorylated on tyrosine residues by activated PTK2B/PYK2. Phosphorylation on tyrosine residues suppresses ion channel activity. Phosphorylated on tyrosine residues in response to CHRM1 activation; this abolishes interaction with CTTN. This is probably due to endocytosis of the phosphorylated channel subunits. Phosphorylated on serine residues in response to increased cAMP levels; phosphorylation is apparently not catalyzed by PKA. Post-translationally, N-glycosylated, with complex, sialylated N-glycans. In terms of tissue distribution, expressed in a wide variety of gastrointestinal smooth muscles. Not expressed in portal vein, renal artery, and uterus.

It localises to the cell membrane. It is found in the membrane. The protein resides in the cell projection. The protein localises to the axon. Its subcellular location is the synapse. It localises to the presynaptic cell membrane. It is found in the synaptosome. The protein resides in the endoplasmic reticulum membrane. The protein localises to the dendrite. Its subcellular location is the lamellipodium membrane. It localises to the cell junction. It is found in the paranodal septate junction. It catalyses the reaction K(+)(in) = K(+)(out). Its activity is regulated as follows. Inhibited by 4-aminopyridine (4-AP). Inhibited by dendrotoxin (DTX) and charybdotoxin (CTX), but not by tetraethylammonium (TEA). Inhibited by tityustoxin-K alpha (TsTX-Kalpha), a toxin that is highly specific for KCNA2. Inhibited by maurotoxin. Inhibited by kappaM conotoxins kappaM-RIIIJ and kappaM-RIIIK. Its function is as follows. Voltage-gated potassium channel that mediates transmembrane potassium transport in excitable membranes, primarily in the brain and the central nervous system, but also in the cardiovascular system. Prevents aberrant action potential firing and regulates neuronal output. Forms tetrameric potassium-selective channels through which potassium ions pass in accordance with their electrochemical gradient. The channel alternates between opened and closed conformations in response to the voltage difference across the membrane. Can form functional homotetrameric channels and heterotetrameric channels that contain variable proportions of KCNA1, KCNA2, KCNA4, KCNA5, KCNA6, KCNA7, and possibly other family members as well; channel properties depend on the type of alpha subunits that are part of the channel. Channel properties are modulated by cytoplasmic beta subunits that regulate the subcellular location of the alpha subunits and promote rapid inactivation of delayed rectifier potassium channels. In vivo, membranes probably contain a mixture of heteromeric potassium channel complexes, making it difficult to assign currents observed in intact tissues to any particular potassium channel family member. Homotetrameric KCNA2 forms a delayed-rectifier potassium channel that opens in response to membrane depolarization, followed by slow spontaneous channel closure. In contrast, a heteromultimer formed by KCNA2 and KCNA4 shows rapid inactivation. Regulates neuronal excitability and plays a role as pacemaker in the regulation of neuronal action potentials. KCNA2-containing channels play a presynaptic role and prevent hyperexcitability and aberrant action potential firing. Response to toxins that are selective for KCNA2-containing potassium channels suggests that in Purkinje cells, dendritic subthreshold KCNA2-containing potassium channels prevent random spontaneous calcium spikes, suppressing dendritic hyperexcitability without hindering the generation of somatic action potentials, and thereby play an important role in motor coordination. Plays a role in the induction of long-term potentiation of neuron excitability in the CA3 layer of the hippocampus. May function as down-stream effector for G protein-coupled receptors and inhibit GABAergic inputs to basolateral amygdala neurons. May contribute to the regulation of neurotransmitter release, such as gamma-aminobutyric acid (GABA). Contributes to the regulation of the axonal release of the neurotransmitter dopamine. Reduced KCNA2 expression plays a role in the perception of neuropathic pain after peripheral nerve injury, but not acute pain. Plays a role in the regulation of the time spent in non-rapid eye movement (NREM) sleep. The polypeptide is Potassium voltage-gated channel subfamily A member 2 (KCNA2) (Canis lupus familiaris (Dog)).